The sequence spans 190 residues: MAMLRPALTLLVFLTILTGGVYPLATTVLGQWWFKDQAEGSLIRQHDEVRGSRLIGQAFSEAKYFQGRPSATAEAPYNPMASGGSNLAASNPALDKEVQARVQALRAANPDARAAVPVELVTASASGLDYGITPDAAFWQAPRVAQARGISEAEVGRLIRENTDAPLAGFLGQPVVNVLKLNMALDALQP.

The chain crosses the membrane as a helical span at residues 10 to 30 (LLVFLTILTGGVYPLATTVLG).

Belongs to the KdpC family. As to quaternary structure, the system is composed of three essential subunits: KdpA, KdpB and KdpC.

It is found in the cell inner membrane. In terms of biological role, part of the high-affinity ATP-driven potassium transport (or Kdp) system, which catalyzes the hydrolysis of ATP coupled with the electrogenic transport of potassium into the cytoplasm. This subunit acts as a catalytic chaperone that increases the ATP-binding affinity of the ATP-hydrolyzing subunit KdpB by the formation of a transient KdpB/KdpC/ATP ternary complex. The sequence is that of Potassium-transporting ATPase KdpC subunit from Cronobacter sakazakii (strain ATCC BAA-894) (Enterobacter sakazakii).